Consider the following 207-residue polypeptide: Large ribosomal subunit protein uL4 (207 aa).

Belongs to the universal ribosomal protein uL4 family. As to quaternary structure, part of the 50S ribosomal subunit.

In terms of biological role, one of the primary rRNA binding proteins, this protein initially binds near the 5'-end of the 23S rRNA. It is important during the early stages of 50S assembly. It makes multiple contacts with different domains of the 23S rRNA in the assembled 50S subunit and ribosome. Functionally, forms part of the polypeptide exit tunnel. The sequence is that of Large ribosomal subunit protein uL4 from Rickettsia rickettsii (strain Iowa).